The following is a 447-amino-acid chain: Ribosomal protein uS12 methylthiotransferase RimO (447 aa).

Positions 10–120 (PKVGFVSLGC…VVNAVHDVVP (111 aa)) constitute an MTTase N-terminal domain. 6 residues coordinate [4Fe-4S] cluster: Cys-19, Cys-55, Cys-84, Cys-153, Cys-157, and Cys-160. In terms of domain architecture, Radical SAM core spans 139–377 (LTPRHYAYLK…MAHQQAISAA (239 aa)). A TRAM domain is found at 380-447 (QMKIGKEIEV…DEYDLWAEML (68 aa)).

Belongs to the methylthiotransferase family. RimO subfamily. It depends on [4Fe-4S] cluster as a cofactor.

The protein localises to the cytoplasm. It catalyses the reaction L-aspartate(89)-[ribosomal protein uS12]-hydrogen + (sulfur carrier)-SH + AH2 + 2 S-adenosyl-L-methionine = 3-methylsulfanyl-L-aspartate(89)-[ribosomal protein uS12]-hydrogen + (sulfur carrier)-H + 5'-deoxyadenosine + L-methionine + A + S-adenosyl-L-homocysteine + 2 H(+). Catalyzes the methylthiolation of an aspartic acid residue of ribosomal protein uS12. In Pseudomonas savastanoi pv. phaseolicola (strain 1448A / Race 6) (Pseudomonas syringae pv. phaseolicola (strain 1448A / Race 6)), this protein is Ribosomal protein uS12 methylthiotransferase RimO.